We begin with the raw amino-acid sequence, 644 residues long: Sodium/hydrogen exchanger 9 (644 aa).

Residues M1–G20 lie on the Lumenal side of the membrane. A helical membrane pass occupies residues A21–F41. Residues K42–R45 are Cytoplasmic-facing. A helical transmembrane segment spans residues F46 to L66. Residues R67–K126 are Lumenal-facing. Residues M127 to G147 traverse the membrane as a helical segment. Residues Y148 to T164 lie on the Cytoplasmic side of the membrane. A helical transmembrane segment spans residues Y165 to V185. Over K186–D203 the chain is Lumenal. A helical membrane pass occupies residues C204 to H224. Residues E225–L235 lie on the Cytoplasmic side of the membrane. Residues L236 to I256 traverse the membrane as a helical segment. The Lumenal segment spans residues Y257–N277. A helical transmembrane segment spans residues F278–L298. Over L299–P309 the chain is Cytoplasmic. Residues M310 to A327 traverse the membrane as a helical segment. Topologically, residues E328 to T333 are lumenal. The helical transmembrane segment at G334–Y350 threads the bilayer. Topologically, residues N351–L364 are cytoplasmic. A helical transmembrane segment spans residues F365–F385. Position 386 (T386) is a topological domain, lumenal. The chain crosses the membrane as a helical span at residues F387–A407. Over R408–W429 the chain is Cytoplasmic. A helical membrane pass occupies residues N430 to I450. At R451 to T465 the chain is on the lumenal side. The chain crosses the membrane as a helical span at residues L466–W486. Topologically, residues L487–D644 are cytoplasmic.

The protein belongs to the monovalent cation:proton antiporter 1 (CPA1) transporter (TC 2.A.36) family. As to quaternary structure, homodimer; phosphatidylinositol-4,5-bisphosphate (PIP2) and phosphatidylinositol 3,4,5-trisphosphate (PIP3) could be involved in the dimer stabilization. Interacts (via the C-terminus) with RACK1. Interacts with CHP1. In terms of tissue distribution, expressed in hair bundles and in vestibular hair bundles. Expressed in brain.

It localises to the late endosome membrane. The protein localises to the early endosome membrane. Its subcellular location is the recycling endosome membrane. The protein resides in the cell membrane. It is found in the cytoplasmic vesicle. It localises to the phagosome membrane. The catalysed reaction is Na(+)(in) + H(+)(out) = Na(+)(out) + H(+)(in). It carries out the reaction K(+)(in) + H(+)(out) = K(+)(out) + H(+)(in). In terms of biological role, endosomal Na(+), K(+)/H(+) antiporter. Mediates the electroneutral exchange of endosomal luminal H(+) for a cytosolic Na(+) or K(+). By facilitating proton efflux, SLC9A9 counteracts the acidity generated by vacuolar (V)-ATPase, thereby limiting luminal acidification. Regulates organellar pH and consequently, endosome maturation and endocytic trafficking of plasma membrane receptors and neurotransporters. Promotes the recycling of transferrin receptors back to the cell surface to facilitate additional iron uptake in the brain. Regulates synaptic transmission by regulating the luminal pH of axonal endosomes. Regulates phagosome lumenal pH, thus affecting phagosome maturation, and consequently, microbicidal activity in macrophages. Can also be active at the cell surface of specialized cells, e.g., in the inner ear hair bundles uses the high K(+) of the endolymph to regulate intracelular pH. This is Sodium/hydrogen exchanger 9 (Slc9a9) from Rattus norvegicus (Rat).